Reading from the N-terminus, the 2473-residue chain is Reducing polyketide synthase grgA (2473 aa).

The Ketosynthase family 3 (KS3) domain occupies 15-446 (REPIAIVGSS…GTNAHAIIES (432 aa)). Catalysis depends on for beta-ketoacyl synthase activity residues Cys-188, His-327, and His-366. A Malonyl-CoA:ACP transacylase (MAT) domain is found at 559-882 (IFTGQGAQWA…SGVLKRGQNA (324 aa)). The segment at 956–1099 (HELLGHSVTH…GGVRLWLGEP (144 aa)) is N-terminal hotdog fold. A dehydratase (DH) domain region spans residues 956–1260 (HELLGHSVTH…IHLSAVGQRR (305 aa)). Residues 956–1262 (HELLGHSVTH…LSAVGQRRDP (307 aa)) form the PKS/mFAS DH domain. The active-site Proton acceptor; for dehydratase activity is His-990. The tract at residues 1114–1262 (MEALDMEQLY…LSAVGQRRDP (149 aa)) is C-terminal hotdog fold. Asp-1172 (proton donor; for dehydratase activity) is an active-site residue. Residues 1300–1606 (TAYFYLRQLR…PSFCSVIVAQ (307 aa)) form a methyltransfrase (MT) domain region. The 174-residue stretch at 2108-2281 (TYLLCGMTGD…AGSVIHIAIL (174 aa)) folds into the Ketoreductase (KR) domain. The 86-residue stretch at 2388 to 2473 (AECLVILESC…LVEWRRLNKS (86 aa)) folds into the Carrier domain. Ser-2426 is subject to O-(pantetheine 4'-phosphoryl)serine.

Pantetheine 4'-phosphate is required as a cofactor.

It functions in the pathway secondary metabolite biosynthesis. Its function is as follows. Reducing polyketide synthase; part of the gene cluster that mediates the biosynthesis of gregatin A, a fungal polyketide featuring an alkylated furanone core. The PKS grgA synthesizes C11 and C4 polyketide chains in the presence and absence of the trans-enoyl reductase grgB, respectively. The polyketide transferase grgF is then responsible for the fusion of the two carbon chains to produce the furanone skeleton of gregatin A. Next, the cytochrome P450 monooxygenase grgG accepts performs the oxidative cyclization to furnish the gregatin scaffold and leads to the formation of desmethylgregatin A. Finally, the O-methyltransferase grgD methylates the carboxyl group of desmethylgregatin A to provide gregatin A. The sequence is that of Reducing polyketide synthase grgA from Penicillium sp.